The chain runs to 64 residues: MAVQKSRVTPSRRGQRRSHDALTAKKLSIDPTSGEVHIRHHVTADGYYRGKKVIAIKASVVEED.

The tract at residues 1 to 28 (MAVQKSRVTPSRRGQRRSHDALTAKKLS) is disordered.

This sequence belongs to the bacterial ribosomal protein bL32 family.

This is Large ribosomal subunit protein bL32 (rpmF) from Xylella fastidiosa (strain 9a5c).